The sequence spans 821 residues: Calpain-3 (821 aa).

The tract at residues 1–34 is disordered; it reads MPTVISASMAPRTGASQVPRTMPQAAQGKGTEAG. The Calpain catalytic domain maps to 73–417; sequence LYLDPEFPPD…FTKLEICNLT (345 aa). Residues cysteine 128, histidine 334, and asparagine 358 contribute to the active site. The interval 418 to 586 is domain III; it reads ADALESDKLQ…KRNLSEEVEN (169 aa). The segment at 587-649 is linker; that stretch reads TISVDRPVRK…EPSNTDQESE (63 aa). The disordered stretch occupies residues 603 to 652; the sequence is IFVSDRANSNKELGVDQESEEGQDKTSPDKQEKSPKPEPSNTDQESEEQQ. Over residues 624 to 638 the composition is skewed to basic and acidic residues; that stretch reads GQDKTSPDKQEKSPK. Over residues 641–652 the composition is skewed to polar residues; the sequence is PSNTDQESEEQQ. 4 consecutive EF-hand domains span residues 649–683, 692–725, 722–757, and 787–821; these read EEQQ…VVNK, FTLE…KKIK, KKIK…AGFH, and VRLE…TMYA. A domain IV region spans residues 650–821; the sequence is EQQQFRNIFR…LEWLQLTMYA (172 aa). 18 residues coordinate Ca(2+): alanine 662, aspartate 665, glutamate 667, glutamate 672, aspartate 705, aspartate 707, serine 709, arginine 711, glutamate 716, aspartate 735, aspartate 737, serine 739, threonine 741, glutamate 746, aspartate 800, aspartate 802, aspartate 804, and isoleucine 806.

It belongs to the peptidase C2 family. In terms of assembly, homodimer; via EF-hand domain 4. Interacts with TTN/titin. Interacts with CMYA5; this interaction, which results in CMYA5 proteolysis, may protect CAPN3 from autolysis. Interacts with SIMC1. Interacts with UTP25; the interaction is required for CAPN3 translocation to the nucleolus. As to expression, skeletal muscle.

It localises to the cytoplasm. The protein localises to the nucleus. The protein resides in the nucleolus. The catalysed reaction is Broad endopeptidase activity.. Its activity is regulated as follows. Activated by micromolar concentrations of calcium and inhibited by calpastatin. Its function is as follows. Calcium-regulated non-lysosomal thiol-protease. Proteolytically cleaves CTBP1. Mediates, with UTP25, the proteasome-independent degradation of p53/TP53. The chain is Calpain-3 (CAPN3) from Sus scrofa (Pig).